Consider the following 475-residue polypeptide: Putative aldehyde dehydrogenase (475 aa).

Residues 146 to 147 (WN) and 223 to 224 (GS) contribute to the NAD(+) site. E245 functions as the Proton acceptor in the catalytic mechanism. L246 serves as a coordination point for NAD(+). Residue C279 is the Nucleophile of the active site. An NAD(+)-binding site is contributed by E379.

The protein belongs to the aldehyde dehydrogenase family.

It carries out the reaction an aldehyde + NAD(+) + H2O = a carboxylate + NADH + 2 H(+). The polypeptide is Putative aldehyde dehydrogenase (Staphylococcus aureus (strain USA300)).